We begin with the raw amino-acid sequence, 347 residues long: D-alanine--D-alanine ligase (347 aa).

The ATP-grasp domain maps to Lys138–Ala339. Ser171–Phe226 serves as a coordination point for ATP. Asp296, Glu308, and Asn310 together coordinate Mg(2+).

This sequence belongs to the D-alanine--D-alanine ligase family. The cofactor is Mg(2+). Mn(2+) is required as a cofactor.

It localises to the cytoplasm. The catalysed reaction is 2 D-alanine + ATP = D-alanyl-D-alanine + ADP + phosphate + H(+). The protein operates within cell wall biogenesis; peptidoglycan biosynthesis. Its function is as follows. Cell wall formation. The sequence is that of D-alanine--D-alanine ligase from Tropheryma whipplei (strain Twist) (Whipple's bacillus).